A 495-amino-acid polypeptide reads, in one-letter code: Glutamate--tRNA ligase (495 aa).

Residues 12 to 22 (PSPTGHLHIGN) carry the 'HIGH' region motif. The 'KMSKS' region motif lies at 259-263 (KLSKR). K262 is a binding site for ATP.

Belongs to the class-I aminoacyl-tRNA synthetase family. Glutamate--tRNA ligase type 1 subfamily. In terms of assembly, monomer.

Its subcellular location is the cytoplasm. The catalysed reaction is tRNA(Glu) + L-glutamate + ATP = L-glutamyl-tRNA(Glu) + AMP + diphosphate. In terms of biological role, catalyzes the attachment of glutamate to tRNA(Glu) in a two-step reaction: glutamate is first activated by ATP to form Glu-AMP and then transferred to the acceptor end of tRNA(Glu). The polypeptide is Glutamate--tRNA ligase (Ligilactobacillus salivarius (strain UCC118) (Lactobacillus salivarius)).